A 273-amino-acid polypeptide reads, in one-letter code: HMP-PP phosphatase (273 aa).

The active-site Nucleophile is the D8. Mg(2+)-binding residues include D8, D10, and D212.

Belongs to the HAD-like hydrolase superfamily. Cof family. The cofactor is Mg(2+).

The catalysed reaction is 4-amino-2-methyl-5-(diphosphooxymethyl)pyrimidine + H2O = 4-amino-2-methyl-5-(phosphooxymethyl)pyrimidine + phosphate + H(+). Catalyzes the hydrolysis of 4-amino-2-methyl-5-hydroxymethylpyrimidine pyrophosphate (HMP-PP) to 4-amino-2-methyl-5-hydroxymethylpyrimidine phosphate (HMP-P). The sequence is that of HMP-PP phosphatase from Yersinia pseudotuberculosis serotype IB (strain PB1/+).